Consider the following 64-residue polypeptide: Alpha-conotoxin CnIL (64 aa).

Positions 1 to 21 (MGMRMMFTVFLLVVLTTTVVS) are cleaved as a signal peptide. Positions 22–49 (FPSDSASDGRDDEAKDERSDIYESKRDG) are excised as a propeptide. 2 cysteine pairs are disulfide-bonded: Cys-51-Cys-56 and Cys-52-Cys-62. Cys-62 is modified (cysteine amide).

This sequence belongs to the conotoxin A superfamily. In terms of tissue distribution, expressed by the venom duct.

Its subcellular location is the secreted. The chain is Alpha-conotoxin CnIL from Conus consors (Singed cone).